The following is a 70-amino-acid chain: Protein SlyX homolog (70 aa).

The protein belongs to the SlyX family.

In Shewanella frigidimarina (strain NCIMB 400), this protein is Protein SlyX homolog.